Reading from the N-terminus, the 432-residue chain is tRNA modification GTPase MnmE (432 aa).

The (6S)-5-formyl-5,6,7,8-tetrahydrofolate site is built by Arg23, Glu85, and Lys124. The 146-residue stretch at Gly217 to Leu362 folds into the TrmE-type G domain. A K(+)-binding site is contributed by Asn227. GTP-binding positions include Asn227–Ser232, Ser246–Thr252, and Asp271–Gly274. Ser231 is a binding site for Mg(2+). Positions 246, 248, and 251 each coordinate K(+). Thr252 is a binding site for Mg(2+). Lys432 is a (6S)-5-formyl-5,6,7,8-tetrahydrofolate binding site.

The protein belongs to the TRAFAC class TrmE-Era-EngA-EngB-Septin-like GTPase superfamily. TrmE GTPase family. As to quaternary structure, homodimer. Heterotetramer of two MnmE and two MnmG subunits. K(+) is required as a cofactor.

The protein localises to the cytoplasm. Exhibits a very high intrinsic GTPase hydrolysis rate. Involved in the addition of a carboxymethylaminomethyl (cmnm) group at the wobble position (U34) of certain tRNAs, forming tRNA-cmnm(5)s(2)U34. The chain is tRNA modification GTPase MnmE from Thermus thermophilus (strain ATCC 27634 / DSM 579 / HB8).